The following is a 466-amino-acid chain: mRNA-capping enzyme subunit alpha (466 aa).

The active-site N6-GMP-lysine intermediate is lysine 67. A disordered region spans residues 408–466 (REQGLKNAQKQFNHQASARSSLSQQHSTEPEQSQDQPKYVDDDDDNWSDDEPDTKRQKI). The span at 413–443 (KNAQKQFNHQASARSSLSQQHSTEPEQSQDQ) shows a compositional bias: polar residues. The span at 448–459 (DDDDDNWSDDEP) shows a compositional bias: acidic residues.

Belongs to the eukaryotic GTase family. Heterodimer. The mRNA-capping enzyme is composed of two separate chains alpha and beta, respectively a mRNA guanylyltransferase and an mRNA 5'-triphosphate monophosphatase.

It is found in the nucleus. It catalyses the reaction a 5'-end diphospho-ribonucleoside in mRNA + GTP + H(+) = a 5'-end (5'-triphosphoguanosine)-ribonucleoside in mRNA + diphosphate. Functionally, second step of mRNA capping. Transfer of the GMP moiety of GTP to the 5'-end of RNA via an enzyme-GMP covalent reaction intermediate. The protein is mRNA-capping enzyme subunit alpha (CEG1) of Kluyveromyces lactis (strain ATCC 8585 / CBS 2359 / DSM 70799 / NBRC 1267 / NRRL Y-1140 / WM37) (Yeast).